The sequence spans 251 residues: MTVTMRQMLEAGVHFGHQTRFWNPRMAPYIFGQRNKIHIVNLEKTMGKYNEAMNYVRKLAANRGTILLVGTKRQAREIVSEEASRAGMPFVDERWLGGMLTNFKTVKQSIKRLKEMEAMVEDGSIERLSKKEALMATREMDKLKKSIGGIKDMGGLPDAMFVIDVGYHKIAITEAQKLGIPIVAVVDTNHSPEGIDYVIPGNDDSSRAIRLYARGVADAVLEGRSQALQDVVAAGSDEFVEVQEDGSDEQA.

The protein belongs to the universal ribosomal protein uS2 family.

This is Small ribosomal subunit protein uS2 from Aromatoleum aromaticum (strain DSM 19018 / LMG 30748 / EbN1) (Azoarcus sp. (strain EbN1)).